A 676-amino-acid polypeptide reads, in one-letter code: Envelope glycoprotein (676 aa).

The signal sequence occupies residues 1–32 (MEGLSLLQLPRDKFRKSSFFVWVIILFQKAFS). The Extracellular portion of the chain corresponds to 33–650 (MPLGVVTNST…DDNWWTGWRQ (618 aa)). Residue N40 is glycosylated (N-linked (GlcNAc...) asparagine; by host). 5 disulfide bridges follow: C53/C609, C108/C135, C121/C147, C511/C556, and C601/C608. The segment at 54 to 201 (KDHLASTDQL…TFLQSPPIRE (148 aa)) is receptor-binding. N-linked (GlcNAc...) asparagine; by host glycosylation is found at N204, N208, N238, N257, N268, N296, and N314. The interval 305-485 (ELSFETLSLN…STSNGLITST (181 aa)) is mucin-like region. A disordered region spans residues 312–351 (SLNETEDDDATSSRTTKGRISDRATRKYSDLVPKDSPGMV). The segment covering 330 to 344 (RISDRATRKYSDLVP) has biased composition (basic and acidic residues). An N-linked (GlcNAc...) asparagine; by host glycan is attached at N366. The disordered stretch occupies residues 406-458 (SSSQILSSSPTMAPSPETQTSTTYTPKLPVMTTEEPTTPPRNSPGSTTEAPTL). Composition is skewed to polar residues over residues 415–430 (PTMA…TTYT) and 448–458 (SPGSTTEAPTL). Residue N463 is glycosylated (N-linked (GlcNAc...) asparagine; by host). The interval 524–539 (HNAAGIAWIPYFGPGA) is fusion peptide. Residues 554–595 (LVCGLRQLANETTQALQLFLRATTELRTYTILNRKAIDFLLR) adopt a coiled-coil conformation. An N-linked (GlcNAc...) asparagine; by host glycan is attached at N563. Residues 615-634 (WTKNITDKINQIIHDFIDNP) adopt a coiled-coil conformation. A glycan (N-linked (GlcNAc...) asparagine; by host) is linked at N618. A helical transmembrane segment spans residues 651–671 (WIPAGIGITGIIIAIIALLCV). S-palmitoyl cysteine; by host attachment occurs at residues C670 and C672. Residues 672–676 (CKLLC) are Cytoplasmic-facing.

The protein belongs to the filoviruses glycoprotein family. As to quaternary structure, homotrimer; each monomer consists of a GP1 and a GP2 subunit linked by disulfide bonds. The resulting peplomers (GP1,2) protrude from the virus surface as spikes. Interacts with host integrin alpha-V/ITGAV. Interacts with host CLEC10A. Binds also to host CD209 and CLEC4M/DC-SIGN(R). Interacts with host FOLR1. Interacts with BST2; this interaction inhibits the antiviral effect of BST2 and this allows viral release from infected cells. Interacts with host FCN1; this interaction enhances viral entry. Interacts with host TLR4; this interaction induces cell death in T-lymphocytes or proinflammatory cytokines and SOCS1 production in monocytes. Interacts with host entry receptor NPC1. In terms of assembly, GP1 and GP2delta are part of GP1,2delta soluble complexes released by ectodomain shedding. The signal peptide region modulates GP's high mannose glycosylation, thereby determining the efficiency of the interactions with DC-SIGN(R). Post-translationally, N-glycosylated. In terms of processing, O-glycosylated in the mucin-like region. Palmitoylation of GP2 is not required for its function. Post-translationally, specific enzymatic cleavages in vivo yield mature proteins. The precursor is processed into GP1 and GP2 by host cell furin in the trans Golgi, and maybe by other host proteases, to yield the mature GP1 and GP2 proteins. The cleavage site corresponds to the furin optimal cleavage sequence [KR]-X-[KR]-R. This cleavage does not seem to be required for function. After the internalization of the virus into cell endosomes, GP1 C-terminus is removed by the endosomal proteases cathepsin B, cathepsin L, or both, leaving a 19-kDa N-terminal fragment which is further digested by cathepsin B. Proteolytic processing of GP1,2 by host ADAM17 can remove the transmembrane anchor of GP2 and leads to shedding of complexes consisting in GP1 and truncated GP2 (GP1,2delta).

The protein resides in the virion membrane. Its subcellular location is the host cell membrane. The protein localises to the secreted. Functionally, trimeric GP1,2 complexes form the virion surface spikes and mediate the viral entry processes, with GP1 acting as the receptor-binding subunit and GP2 as the membrane fusion subunit. At later times of infection, down-regulates the expression of various host cell surface molecules that are essential for immune surveillance and cell adhesion. Down-modulates several integrins including ITGA1, ITGA2, ITGA3, ITGA4, ITGA5, ITGA6, ITGAV and ITGB1. This decrease in cell adhesion molecules may lead to cell detachment, contributing to the disruption of blood vessel integrity and hemorrhages developed during infection (cytotoxicity). Interacts with host TLR4 and thereby stimulates the differentiation and activation of monocytes leading to bystander death of T-lymphocytes. Down-regulates as well the function of host natural killer cells. Counteracts the antiviral effect of host BST2/tetherin that restricts release of progeny virions from infected cells. However, cooperates with VP40 and host BST2 to activate canonical NF-kappa-B pathway in a manner dependent on neddylation. Its function is as follows. Functions as a decoy for anti-GP1,2 antibodies thereby contributing to viral immune evasion. Interacts and activates host macrophages and dendritic cells inducing up-regulation of cytokine transcription. This effect is mediated throught activation of host TLR4. Responsible for binding to the receptor(s) on target cells. Interacts with CD209/DC-SIGN and CLEC4M/DC-SIGNR which act as cofactors for virus entry into dendritic cells (DCs) and endothelial cells. Binding to the macrophage specific lectin CLEC10A also seems to enhance virus infectivity. Interaction with FOLR1/folate receptor alpha may be a cofactor for virus entry in some cell types, although results are contradictory. Members of the Tyro3 receptor tyrosine kinase family also seem to be cell entry factors in filovirus infection. Once attached, the virions are internalized through clathrin-dependent endocytosis and/or macropinocytosis. After internalization of the virus into the endosomes of the host cell, proteolysis of GP1 by two cysteine proteases, CTSB/cathepsin B and CTSL/cathepsin L removes the glycan cap and allows GP1 binding to the host entry receptor NPC1. NPC1-binding, Ca(2+) and acidic pH induce a conformational change of GP2, which unmasks its fusion peptide and permit membranes fusion. In terms of biological role, acts as a class I viral fusion protein. Under the current model, the protein has at least 3 conformational states: pre-fusion native state, pre-hairpin intermediate state, and post-fusion hairpin state. During viral and target cell membrane fusion, the coiled coil regions (heptad repeats) assume a trimer-of-hairpins structure, positioning the fusion peptide in close proximity to the C-terminal region of the ectodomain. The formation of this structure appears to drive apposition and subsequent fusion of viral and target cell membranes. Responsible for penetration of the virus into the cell cytoplasm by mediating the fusion of the membrane of the endocytosed virus particle with the endosomal membrane. Low pH in endosomes induces an irreversible conformational change in GP2, releasing the fusion hydrophobic peptide. The sequence is that of Envelope glycoprotein (GP) from Sudan ebolavirus (strain Maleo-79) (SEBOV).